Reading from the N-terminus, the 102-residue chain is Small ribosomal subunit protein uS10 (102 aa).

This sequence belongs to the universal ribosomal protein uS10 family. As to quaternary structure, part of the 30S ribosomal subunit.

Its function is as follows. Involved in the binding of tRNA to the ribosomes. This is Small ribosomal subunit protein uS10 from Desulforamulus reducens (strain ATCC BAA-1160 / DSM 100696 / MI-1) (Desulfotomaculum reducens).